Reading from the N-terminus, the 131-residue chain is Small ribosomal subunit protein uS11 (131 aa).

Residues Met1–Arg15 are compositionally biased toward basic residues. The disordered stretch occupies residues Met1 to Ala23.

This sequence belongs to the universal ribosomal protein uS11 family. In terms of assembly, part of the 30S ribosomal subunit. Interacts with proteins S7 and S18. Binds to IF-3.

Functionally, located on the platform of the 30S subunit, it bridges several disparate RNA helices of the 16S rRNA. Forms part of the Shine-Dalgarno cleft in the 70S ribosome. This is Small ribosomal subunit protein uS11 from Clostridium perfringens (strain 13 / Type A).